Here is a 292-residue protein sequence, read N- to C-terminus: AhcY transcriptional activator HvrB (292 aa).

In terms of domain architecture, HTH lysR-type spans 10–67 (PPLTALRAFAATASEGGFSAAARKLNVTHAAIAQQVRALEADLDVPLVWRDGKHLHLT). Positions 27–46 (FSAAARKLNVTHAAIAQQVR) form a DNA-binding region, H-T-H motif.

It belongs to the LysR transcriptional regulatory family.

Its function is as follows. Functions as a low-light activator of ahcY expression (gene for S-adenosyl-L-homocysteine hydrolase) and as a high-light activator of an uncharacterized 21.6 kDa protein in the ahcY-hvrB intergenic region (orf5). It is also a negative regulator of its own expression. The polypeptide is AhcY transcriptional activator HvrB (hvrB) (Rhodobacter capsulatus (strain ATCC BAA-309 / NBRC 16581 / SB1003)).